A 154-amino-acid chain; its full sequence is Myoglobin (154 aa).

The region spanning 2–148 is the Globin domain; that stretch reads GLSDDEWHHV…FRNDMASKYK (147 aa). His-65 contacts nitrite. An O2-binding site is contributed by His-65. His-94 contributes to the heme b binding site.

The protein belongs to the globin family. In terms of assembly, monomeric.

The protein localises to the cytoplasm. It localises to the sarcoplasm. The enzyme catalyses Fe(III)-heme b-[protein] + nitric oxide + H2O = Fe(II)-heme b-[protein] + nitrite + 2 H(+). It carries out the reaction H2O2 + AH2 = A + 2 H2O. Its function is as follows. Monomeric heme protein which primary function is to store oxygen and facilitate its diffusion within muscle tissues. Reversibly binds oxygen through a pentacoordinated heme iron and enables its timely and efficient release as needed during periods of heightened demand. Depending on the oxidative conditions of tissues and cells, and in addition to its ability to bind oxygen, it also has a nitrite reductase activity whereby it regulates the production of bioactive nitric oxide. Under stress conditions, like hypoxia and anoxia, it also protects cells against reactive oxygen species thanks to its pseudoperoxidase activity. This Graptemys geographica (Common map turtle) protein is Myoglobin (MB).